Reading from the N-terminus, the 88-residue chain is Large ribosomal subunit protein bL27 (88 aa).

The tract at residues 1–21 is disordered; the sequence is MAHKKGQGSTQNNRDSAGRRL.

The protein belongs to the bacterial ribosomal protein bL27 family.

This is Large ribosomal subunit protein bL27 from Helicobacter pylori (strain P12).